Here is a 251-residue protein sequence, read N- to C-terminus: HTH-type transcriptional regulator UlaR (251 aa).

An HTH deoR-type domain is found at Glu-3 to Ala-58. Positions Val-20–Asp-39 form a DNA-binding region, H-T-H motif.

The protein resides in the cytoplasm. Its function is as follows. Represses ulaG and the ulaABCDEF operon. The polypeptide is HTH-type transcriptional regulator UlaR (Escherichia coli O127:H6 (strain E2348/69 / EPEC)).